A 279-amino-acid polypeptide reads, in one-letter code: Conserved oligomeric Golgi complex subunit 7 (279 aa).

In terms of assembly, component of the conserved oligomeric Golgi (COG or Sec34/Sec35) complex which consists of eight different proteins COG1-COG8.

Its subcellular location is the golgi apparatus membrane. Functionally, acts as a component of the peripheral membrane COG complex that is involved in intra-Golgi protein trafficking. COG is located at the cis-Golgi, and regulates tethering of retrograde intra-Golgi vesicles and possibly a number of other membrane trafficking events. In Saccharomyces cerevisiae (strain ATCC 204508 / S288c) (Baker's yeast), this protein is Conserved oligomeric Golgi complex subunit 7 (COG7).